The sequence spans 287 residues: Putative daunorubicin C-13 ketoreductase DnrU (287 aa).

Gly-24 to Gly-30 provides a ligand contact to NADP(+). Ser-149 is a binding site for substrate. Tyr-175 serves as the catalytic Proton acceptor.

The protein belongs to the short-chain dehydrogenases/reductases (SDR) family.

Functionally, could reduce the 13-carbonyl of daunorubicin to produce (13S)-13-dihydrodaunorubicin. Could also be able to reduce the 13-carbonyl of doxorubicin. This Streptomyces sp. (strain C5) protein is Putative daunorubicin C-13 ketoreductase DnrU.